The sequence spans 232 residues: 2,3,4,5-tetrahydropyridine-2,6-dicarboxylate N-acetyltransferase (232 aa).

The protein belongs to the transferase hexapeptide repeat family. DapH subfamily.

It catalyses the reaction (S)-2,3,4,5-tetrahydrodipicolinate + acetyl-CoA + H2O = L-2-acetamido-6-oxoheptanedioate + CoA. The protein operates within amino-acid biosynthesis; L-lysine biosynthesis via DAP pathway; LL-2,6-diaminopimelate from (S)-tetrahydrodipicolinate (acetylase route): step 1/3. Catalyzes the transfer of an acetyl group from acetyl-CoA to tetrahydrodipicolinate. The polypeptide is 2,3,4,5-tetrahydropyridine-2,6-dicarboxylate N-acetyltransferase (Streptococcus pneumoniae (strain Taiwan19F-14)).